Consider the following 359-residue polypeptide: Peptide chain release factor 1 (359 aa).

N5-methylglutamine is present on glutamine 236. Positions 288-308 (QDEQDAERKSTIGTGDRSERI) are disordered. Over residues 293–308 (AERKSTIGTGDRSERI) the composition is skewed to basic and acidic residues.

It belongs to the prokaryotic/mitochondrial release factor family. Post-translationally, methylated by PrmC. Methylation increases the termination efficiency of RF1.

Its subcellular location is the cytoplasm. Functionally, peptide chain release factor 1 directs the termination of translation in response to the peptide chain termination codons UAG and UAA. The sequence is that of Peptide chain release factor 1 from Streptococcus uberis (strain ATCC BAA-854 / 0140J).